A 437-amino-acid polypeptide reads, in one-letter code: Probable peptidoglycan-N-acetylglucosamine deacetylase ARB_03699 (437 aa).

Positions 1-20 (MLMRLYTFFAAALLACCAAA) are cleaved as a signal peptide. The interval 47–132 (STRAATTTTT…STSAAAPSTP (86 aa)) is disordered. An N-linked (GlcNAc...) asparagine glycan is attached at asparagine 99. The NodB homology domain maps to 149–334 (GTVAITFDDG…EVKRRGLKAV (186 aa)). Aspartate 156 acts as the Proton acceptor in catalysis. Positions 157, 209, and 213 each coordinate Zn(2+). Residue tyrosine 251 coordinates substrate. Histidine 308 (proton donor) is an active-site residue. The span at 350–370 (TTPVQVPTGTSTTSPTATPTS) shows a compositional bias: low complexity. The segment at 350–384 (TTPVQVPTGTSTTSPTATPTSPGTPPPAPTQPGVA) is disordered. Positions 389 to 435 (KWHTVVSGDTCYDIAAANGISLDNLYKWNPAVGTSCASLWLGYAVCV) constitute a LysM domain.

Requires Zn(2+) as cofactor. The cofactor is Co(2+).

The protein resides in the secreted. The catalysed reaction is peptidoglycan-N-acetyl-D-glucosamine + H2O = peptidoglycan-D-glucosamine + acetate.. In terms of biological role, catalyzes the deacetylation of N-acetylglucosamine (GlcNAc) residues in peptidoglycan. The chain is Probable peptidoglycan-N-acetylglucosamine deacetylase ARB_03699 from Arthroderma benhamiae (strain ATCC MYA-4681 / CBS 112371) (Trichophyton mentagrophytes).